Consider the following 342-residue polypeptide: 3-isopropylmalate dehydrogenase (342 aa).

Residues arginine 87, arginine 97, arginine 121, and aspartate 212 each contribute to the substrate site. Aspartate 212, aspartate 236, and aspartate 240 together coordinate Mg(2+). 272-284 lines the NAD(+) pocket; that stretch reads GSAPDIAGRQLAD. Residues 319–328 show a composition bias toward low complexity; sequence RAAAGAAQPS. Residues 319–342 form a disordered region; sequence RAAAGAAQPSTRERGEDLAARAAG. A compositionally biased stretch (basic and acidic residues) spans 329-342; sequence TRERGEDLAARAAG.

Belongs to the isocitrate and isopropylmalate dehydrogenases family. LeuB type 2 subfamily. Homodimer. Mg(2+) is required as a cofactor. It depends on Mn(2+) as a cofactor.

It localises to the cytoplasm. The enzyme catalyses (2R,3S)-3-isopropylmalate + NAD(+) = 4-methyl-2-oxopentanoate + CO2 + NADH. It participates in amino-acid biosynthesis; L-leucine biosynthesis; L-leucine from 3-methyl-2-oxobutanoate: step 3/4. In terms of biological role, catalyzes the oxidation of 3-carboxy-2-hydroxy-4-methylpentanoate (3-isopropylmalate) to 3-carboxy-4-methyl-2-oxopentanoate. The product decarboxylates to 4-methyl-2 oxopentanoate. The protein is 3-isopropylmalate dehydrogenase of Frankia casuarinae (strain DSM 45818 / CECT 9043 / HFP020203 / CcI3).